Here is a 249-residue protein sequence, read N- to C-terminus: Adenylate kinase (249 aa).

ATP is bound at residue 43–48 (GAGKGT). Residues 63–92 (ATGDMLRAQVAAKSALGVEAKKIMDQGGLV) form an NMP region. Residues T64, R69, 90–92 (GLV), 119–122 (GFPR), and Q126 contribute to the AMP site. Residues 160–197 (GRLVHPASGRSYHKLFNPPKKDMIDDVSGDALVQRSDD) form an LID region. ATP-binding positions include R161 and 170-171 (SY). AMP-binding residues include R194 and R205. Q233 contacts ATP.

This sequence belongs to the adenylate kinase family. AK2 subfamily. As to quaternary structure, monomer.

It localises to the cytoplasm. The protein resides in the cytosol. The protein localises to the mitochondrion intermembrane space. The catalysed reaction is AMP + ATP = 2 ADP. Its function is as follows. Catalyzes the reversible transfer of the terminal phosphate group between ATP and AMP. Plays an important role in cellular energy homeostasis and in adenine nucleotide metabolism. Adenylate kinase activity is critical for regulation of the phosphate utilization and the AMP de novo biosynthesis pathways. The polypeptide is Adenylate kinase (Debaryomyces hansenii (strain ATCC 36239 / CBS 767 / BCRC 21394 / JCM 1990 / NBRC 0083 / IGC 2968) (Yeast)).